Here is a 403-residue protein sequence, read N- to C-terminus: 26S proteasome regulatory subunit 8 homolog (403 aa).

Position 186–193 (186–193) interacts with ATP; it reads GPPGTGKT.

This sequence belongs to the AAA ATPase family.

The protein localises to the cytoplasm. It is found in the nucleus. In terms of biological role, the 26S proteasome is involved in the ATP-dependent degradation of ubiquitinated proteins. The regulatory (or ATPase) complex confers ATP dependency and substrate specificity to the 26S complex. This is 26S proteasome regulatory subunit 8 homolog (let1) from Schizosaccharomyces pombe (strain 972 / ATCC 24843) (Fission yeast).